The primary structure comprises 441 residues: ATP-dependent protease ATPase subunit HslU (441 aa).

ATP contacts are provided by residues Ile18, 60–65, Asp254, Glu319, and Arg391; that span reads GVGKTE.

Belongs to the ClpX chaperone family. HslU subfamily. A double ring-shaped homohexamer of HslV is capped on each side by a ring-shaped HslU homohexamer. The assembly of the HslU/HslV complex is dependent on binding of ATP.

Its subcellular location is the cytoplasm. Its function is as follows. ATPase subunit of a proteasome-like degradation complex; this subunit has chaperone activity. The binding of ATP and its subsequent hydrolysis by HslU are essential for unfolding of protein substrates subsequently hydrolyzed by HslV. HslU recognizes the N-terminal part of its protein substrates and unfolds these before they are guided to HslV for hydrolysis. This is ATP-dependent protease ATPase subunit HslU from Actinobacillus succinogenes (strain ATCC 55618 / DSM 22257 / CCUG 43843 / 130Z).